A 504-amino-acid polypeptide reads, in one-letter code: MGSITESQEPLRFFATGDKHESASSARPPTYVQVLIVGAGFAGLMAALECWRKGHDVVGIVERNQGPNYSGDLIIIQPSALEIMKHWPQMRRELEEDKVTVGTYYYRHNGELVDGPAHPNYNAPEYVAEREARPGGFPYVGAVQIRKKFYRMLLRQVARLGFRVDYGQRVESYFEDDSAGVAGVRMTDGSIRKAHVVVAADGFRSRSELLIADEYLPTQSSGMSVYRTAFPAKLALADEAVRQRWGGKHTYEFWMGSGMHIGLYLSPELAAFGITPRDHLLAKDKVARESWDPDVSPDEVIDVLRRAKVPGDSIIHWPLRWRNLRREWVSPGGRVVQIGDAAHSTVPSSAAGGTLALEDAITLATSLQIASSPAAASGPGAGAGAGVPLGTRVYNLLRYERASCTQKMAFVNAQVLGDTTDWDAVRADPSKVRVRYPKWFFRHDPEGYVYEKYGQAFAHLVSGAEFHNTNIPPGHQFVHWTLEGIHREMAAGKKVEDLLDGDWT.

Arginine 146 lines the FAD pocket. Arginine 227 is an active-site residue. 2 residues coordinate FAD: aspartate 340 and glycine 353.

The protein belongs to the paxM FAD-dependent monooxygenase family. It depends on FAD as a cofactor.

It functions in the pathway secondary metabolite biosynthesis. Its function is as follows. FAD-dependent monooxygenase; part of the gene cluster that mediates the biosynthesis of the tetrahydroxanthone dimer neosartorin, which exhibits antibacterial activity. The two different monomeric units appear to be synthesized by the same set of enzymes, among which the Baeyer-Villiger monooxygenase nsrF is the key enzyme for the divergence of the biosynthetic routes. The pathway begins with the synthesis of atrochrysone thioester by the polyketide synthase nsrB. The atrochrysone carboxyl ACP thioesterase nsrC then breaks the thioester bond and releases the atrochrysone carboxylic acid from AacuL. Atrochrysone carboxylic acid is decarboxylated by the decarboxylase nsrE, and oxidized by the anthrone oxygenase nsrD to yield emodin. Emodin is then reduced to emodin hydroquinone by the oxidoreductase nsrR. A-ring reduction by the short chain dehydrogenase nsrJ, dehydration by the scytalone dehydratase-like protein nsrI and probable spontaneous re-oxidation, results in overall deoxygenation to chrysophanol. The Baeyer-Villiger monooxygenase nsrF accepts chrysophanol as a substrate to insert one oxygen atom at two different positions to yield the precursors of both monomric units. NsrF is promiscuous/flexible in interacting with the 2 (non methylated and methylated) aromatic rings of chrysophanol, thus diverging the biosynthetic pathway at this point. After the hydrolysis of the lactones, methylesterification by the methyltransferase nsrG yields respectively moniliphenone and 2,2',6'-trihydroxy-4-methyl-6-methoxya-cyldiphenylmethanone. The next steps are the hydroxylation by the FAD-dependent monooxygenase nsrK, followed by isomerization by the monooxygenase nsrQ. The short chain dehydrogenase/reductase nsrO then catalyzes the C-5 ketoreduction to give the xanthone skeleton of blennolide C and 5-acetylblennolide A. The acetyltransferase nsrL has a strict substrate specificity and uses only blennolide A but not blennolide C to yield 5-acetylblennolide A as the single-acetylated product. In the final step of the biosynthesis, the heterodimerization of the 2 xanthones, blennolide C and 5-acetylblennolide A, is catalyzed by the cytochrome P450 monooxygenase nsrP. NsrP can utilize at least three different xanthones as its substrates to perform the dimerization reaction. The polypeptide is FAD-dependent monooxygenase nsrK (Aspergillus novofumigatus (strain IBT 16806)).